The chain runs to 68 residues: Protein VNG_1110C (68 aa).

The polypeptide is Protein VNG_1110C (Halobacterium salinarum (strain ATCC 700922 / JCM 11081 / NRC-1) (Halobacterium halobium)).